Reading from the N-terminus, the 462-residue chain is UDP-N-acetylmuramoylalanine--D-glutamate ligase (462 aa).

ATP is bound at residue 117–123 (GTNGKTT).

This sequence belongs to the MurCDEF family.

It is found in the cytoplasm. The enzyme catalyses UDP-N-acetyl-alpha-D-muramoyl-L-alanine + D-glutamate + ATP = UDP-N-acetyl-alpha-D-muramoyl-L-alanyl-D-glutamate + ADP + phosphate + H(+). The protein operates within cell wall biogenesis; peptidoglycan biosynthesis. In terms of biological role, cell wall formation. Catalyzes the addition of glutamate to the nucleotide precursor UDP-N-acetylmuramoyl-L-alanine (UMA). The sequence is that of UDP-N-acetylmuramoylalanine--D-glutamate ligase from Synechococcus sp. (strain CC9902).